The chain runs to 636 residues: Protein BCAP (636 aa).

Coiled coils occupy residues 36 to 97 (LSCL…EQKE), 141 to 220 (ESEN…WNLQ), 249 to 325 (YKQR…HGKN), 377 to 484 (ISSE…ECQE), and 519 to 631 (LEEE…KMNS).

Belongs to the ODF2 family. As to expression, mainly expressed in trachea and testis. Not detected in bone marrow, bladder, leukocytes. Only weakly detected in tongue, stomach, brain and ovaries.

It localises to the cytoplasm. It is found in the cytoskeleton. The protein localises to the microtubule organizing center. The protein resides in the centrosome. Its subcellular location is the centriole. It localises to the centriolar satellite. It is found in the cilium basal body. Functionally, acts as a suppressor of ciliogenesis, specifically, the initiation of ciliogenesis. The sequence is that of Protein BCAP from Homo sapiens (Human).